Here is a 94-residue protein sequence, read N- to C-terminus: Probable FAD-linked sulfhydryl oxidase FPV093 (94 aa).

Residues 1 to 94 (MDPRYWGSSF…IDIKKVKKLI (94 aa)) form the ERV/ALR sulfhydryl oxidase domain. Cys-41 and Cys-44 are joined by a disulfide.

This sequence belongs to the poxviruses E10 family. Requires FAD as cofactor.

It carries out the reaction 2 R'C(R)SH + O2 = R'C(R)S-S(R)CR' + H2O2. Functionally, FAD-dependent sulfhydryl oxidase that catalyzes disulfide bond formation. The sequence is that of Probable FAD-linked sulfhydryl oxidase FPV093 from Fowlpox virus (strain NVSL) (FPV).